A 586-amino-acid chain; its full sequence is Guanylate-binding protein 5 (586 aa).

Positions Met-1 to Asp-306 are NLRP3-binding. Residues Met-1–Cys-309 form a GTPase domain (Globular) region. Positions Thr-35–Met-276 constitute a GB1/RHD3-type G domain. GTP is bound by residues Gly-45 to Ser-52, Val-67 to Ser-69, Arg-181 to Asp-182, and Leu-245. The tract at residues Met-529–Leu-586 is required for tetramerization, but not for dimerization. Cys-583 bears the Cysteine methyl ester mark. The S-geranylgeranyl cysteine moiety is linked to residue Cys-583. Residues Val-584–Leu-586 constitute a propeptide, removed in mature form.

The protein belongs to the TRAFAC class dynamin-like GTPase superfamily. GB1/RHD3 GTPase family. GB1 subfamily. As to quaternary structure, homodimer; homodimerizes upon GTP-binding, forming a close face-to-face dimer. Heterodimer with other family members, including GBP1, GBP2, GBP3 and GBP4. May also form tetramers (dimer of dimers) in the presence of GTP. Interacts with NLRP3, possibly in its tetrameric form, and promotes PYCARD/ASC polymerization. In terms of assembly, homodimer; homodimerizes upon GTP-binding. GDP-bound form remains homodimeric. Homodimer; homodimerizes upon GTP-binding. GDP-bound is monomeric. In terms of processing, isoprenylation is required for proper subcellular location. In terms of tissue distribution, expressed in peripheral blood monocytes (at protein level).

It is found in the cytoplasmic vesicle membrane. The protein localises to the golgi apparatus membrane. It localises to the cytoplasm. It catalyses the reaction GTP + H2O = GDP + phosphate + H(+). Functionally, interferon (IFN)-inducible GTPase that plays important roles in innate immunity against a diverse range of bacterial, viral and protozoan pathogens. Hydrolyzes GTP, but in contrast to other family members, does not produce GMP. Following infection, recruited to the pathogen-containing vacuoles or vacuole-escaped bacteria and acts as a positive regulator of inflammasome assembly by promoting the release of inflammasome ligands from bacteria. Acts by promoting lysis of pathogen-containing vacuoles, releasing pathogens into the cytosol. Following pathogen release in the cytosol, promotes recruitment of proteins that mediate bacterial cytolysis: this liberates ligands that are detected by inflammasomes, such as lipopolysaccharide (LPS) that activates the non-canonical CASP4/CASP11 inflammasome or double-stranded DNA (dsDNA) that activates the AIM2 inflammasome. As an activator of NLRP3 inflammasome assembly: promotes selective NLRP3 inflammasome assembly in response to microbial and soluble, but not crystalline, agents. Independently of its GTPase activity, acts as an inhibitor of various viruses infectivity, such as HIV-1, Zika and influenza A viruses, by inhibiting FURIN-mediated maturation of viral envelope proteins. Antigenic tumor-specific truncated splice form. This Homo sapiens (Human) protein is Guanylate-binding protein 5.